A 194-amino-acid polypeptide reads, in one-letter code: Protein GrpE (194 aa).

Over residues methionine 1–proline 13 the composition is skewed to polar residues. The segment at methionine 1 to leucine 50 is disordered. Residues arginine 21–leucine 50 are compositionally biased toward low complexity.

It belongs to the GrpE family. As to quaternary structure, homodimer.

Its subcellular location is the cytoplasm. Functionally, participates actively in the response to hyperosmotic and heat shock by preventing the aggregation of stress-denatured proteins, in association with DnaK and GrpE. It is the nucleotide exchange factor for DnaK and may function as a thermosensor. Unfolded proteins bind initially to DnaJ; upon interaction with the DnaJ-bound protein, DnaK hydrolyzes its bound ATP, resulting in the formation of a stable complex. GrpE releases ADP from DnaK; ATP binding to DnaK triggers the release of the substrate protein, thus completing the reaction cycle. Several rounds of ATP-dependent interactions between DnaJ, DnaK and GrpE are required for fully efficient folding. The polypeptide is Protein GrpE (Paraburkholderia xenovorans (strain LB400)).